A 905-amino-acid chain; its full sequence is DNA gyrase subunit A (905 aa).

Residues 35-524 (IPDVRDGLKP…GEFDQDIEDL (490 aa)) form the Topo IIA-type catalytic domain. Tyr-123 (O-(5'-phospho-DNA)-tyrosine intermediate) is an active-site residue. The GyrA-box signature appears at 551-557 (QKRGGKG). The segment at 882–905 (IAESSDDNEEDSEFEEEVAEEGSE) is disordered. Residues 885–905 (SSDDNEEDSEFEEEVAEEGSE) show a composition bias toward acidic residues.

The protein belongs to the type II topoisomerase GyrA/ParC subunit family. Heterotetramer, composed of two GyrA and two GyrB chains. In the heterotetramer, GyrA contains the active site tyrosine that forms a transient covalent intermediate with DNA, while GyrB binds cofactors and catalyzes ATP hydrolysis.

Its subcellular location is the cytoplasm. It carries out the reaction ATP-dependent breakage, passage and rejoining of double-stranded DNA.. Its function is as follows. A type II topoisomerase that negatively supercoils closed circular double-stranded (ds) DNA in an ATP-dependent manner to modulate DNA topology and maintain chromosomes in an underwound state. Negative supercoiling favors strand separation, and DNA replication, transcription, recombination and repair, all of which involve strand separation. Also able to catalyze the interconversion of other topological isomers of dsDNA rings, including catenanes and knotted rings. Type II topoisomerases break and join 2 DNA strands simultaneously in an ATP-dependent manner. This Rickettsia bellii (strain RML369-C) protein is DNA gyrase subunit A.